The sequence spans 465 residues: Dihydrolipoyl dehydrogenase (465 aa).

FAD-binding positions include 34–42, Lys51, and Gly114; that span reads EEREAGGTC. An intrachain disulfide couples Cys42 to Cys47. Residues 180 to 184, Glu203, Val237, and 264 to 267 each bind NAD(+); these read GGGVI and SIGR. FAD contacts are provided by Asp307 and Ala315. The Proton acceptor role is filled by His439.

The protein belongs to the class-I pyridine nucleotide-disulfide oxidoreductase family. It depends on FAD as a cofactor.

It localises to the cytoplasm. The catalysed reaction is N(6)-[(R)-dihydrolipoyl]-L-lysyl-[protein] + NAD(+) = N(6)-[(R)-lipoyl]-L-lysyl-[protein] + NADH + H(+). Functionally, the branched-chain alpha-keto dehydrogenase complex catalyzes the overall conversion of alpha-keto acids to acyl-CoA and CO(2). It contains multiple copies of 3 enzymatic components: branched-chain alpha-keto acid decarboxylase (E1), lipoamide acyltransferase (E2) and lipoamide dehydrogenase (E3). The chain is Dihydrolipoyl dehydrogenase (lpdA) from Chlamydia muridarum (strain MoPn / Nigg).